Consider the following 354-residue polypeptide: Fructose-bisphosphate aldolase 2 (354 aa).

Ser50 serves as a coordination point for D-glyceraldehyde 3-phosphate. Asp83 functions as the Proton donor in the catalytic mechanism. The Zn(2+) site is built by His84, Asp105, Glu142, and His198. A dihydroxyacetone phosphate-binding site is contributed by Gly199. Zn(2+) is bound at residue His232. Residues 233-235 and 275-278 contribute to the dihydroxyacetone phosphate site; these read GSS and NIDT.

Belongs to the class II fructose-bisphosphate aldolase family. In terms of assembly, homodimer. Zn(2+) serves as cofactor.

The catalysed reaction is beta-D-fructose 1,6-bisphosphate = D-glyceraldehyde 3-phosphate + dihydroxyacetone phosphate. The protein operates within carbohydrate biosynthesis; Calvin cycle. It participates in carbohydrate degradation; glycolysis; D-glyceraldehyde 3-phosphate and glycerone phosphate from D-glucose: step 4/4. Functionally, catalyzes the aldol condensation of dihydroxyacetone phosphate (DHAP or glycerone-phosphate) with glyceraldehyde 3-phosphate (G3P) to form fructose 1,6-bisphosphate (FBP) in gluconeogenesis and the reverse reaction in glycolysis. The protein is Fructose-bisphosphate aldolase 2 (cfxB) of Cereibacter sphaeroides (Rhodobacter sphaeroides).